Here is a 222-residue protein sequence, read N- to C-terminus: Phosphoribosylformylglycinamidine synthase subunit PurQ (222 aa).

Residues 2–222 (KAAVITFPGS…RALLGGMALV (221 aa)) form the Glutamine amidotransferase type-1 domain. Catalysis depends on cysteine 86, which acts as the Nucleophile. Active-site residues include histidine 194 and glutamate 196.

In terms of assembly, part of the FGAM synthase complex composed of 1 PurL, 1 PurQ and 2 PurS subunits.

It localises to the cytoplasm. The enzyme catalyses N(2)-formyl-N(1)-(5-phospho-beta-D-ribosyl)glycinamide + L-glutamine + ATP + H2O = 2-formamido-N(1)-(5-O-phospho-beta-D-ribosyl)acetamidine + L-glutamate + ADP + phosphate + H(+). It catalyses the reaction L-glutamine + H2O = L-glutamate + NH4(+). Its pathway is purine metabolism; IMP biosynthesis via de novo pathway; 5-amino-1-(5-phospho-D-ribosyl)imidazole from N(2)-formyl-N(1)-(5-phospho-D-ribosyl)glycinamide: step 1/2. Its function is as follows. Part of the phosphoribosylformylglycinamidine synthase complex involved in the purines biosynthetic pathway. Catalyzes the ATP-dependent conversion of formylglycinamide ribonucleotide (FGAR) and glutamine to yield formylglycinamidine ribonucleotide (FGAM) and glutamate. The FGAM synthase complex is composed of three subunits. PurQ produces an ammonia molecule by converting glutamine to glutamate. PurL transfers the ammonia molecule to FGAR to form FGAM in an ATP-dependent manner. PurS interacts with PurQ and PurL and is thought to assist in the transfer of the ammonia molecule from PurQ to PurL. The sequence is that of Phosphoribosylformylglycinamidine synthase subunit PurQ from Cereibacter sphaeroides (strain ATCC 17023 / DSM 158 / JCM 6121 / CCUG 31486 / LMG 2827 / NBRC 12203 / NCIMB 8253 / ATH 2.4.1.) (Rhodobacter sphaeroides).